The chain runs to 357 residues: Gene 58 protein (357 aa).

The protein belongs to the herpesviridae BMRF2 family.

The chain is Gene 58 protein (58) from Saimiri sciureus (Common squirrel monkey).